The primary structure comprises 200 residues: Small ribosomal subunit protein uS4 (200 aa).

Residues 22 to 42 are disordered; that stretch reads TGKELEKRPYAPGPHGPGQRK. Residues 92 to 155 enclose the S4 RNA-binding domain; that stretch reads TRLDNLVYRL…QNLAVVKESV (64 aa).

This sequence belongs to the universal ribosomal protein uS4 family. Part of the 30S ribosomal subunit. Contacts protein S5. The interaction surface between S4 and S5 is involved in control of translational fidelity.

Its function is as follows. One of the primary rRNA binding proteins, it binds directly to 16S rRNA where it nucleates assembly of the body of the 30S subunit. Functionally, with S5 and S12 plays an important role in translational accuracy. The protein is Small ribosomal subunit protein uS4 of Bacillus pumilus (strain SAFR-032).